We begin with the raw amino-acid sequence, 2408 residues long: Protein ELYS (2408 aa).

The seven-bladed beta propeller repeats stretch occupies residues 1-492; it reads MQNLEAQVTG…SGLIHFACTG (492 aa). Positions 1016-2408 are disordered; the sequence is YSLPSLVWRE…AKPVTRRKMR (1393 aa). Residues 1124 to 1145 are compositionally biased toward polar residues; sequence PLTSSDTDNNQTPHKSPLLKTS. Residues 1457 to 1466 show a composition bias toward acidic residues; it reads NDQDSEEIEE. Composition is skewed to polar residues over residues 1705 to 1719 and 1735 to 1750; these read INEG…QSTL and PADS…TLPT. The span at 2136–2149 shows a compositional bias: basic and acidic residues; sequence QASKIQEDLSDTPR. Sufficient for chromatin-binding stretches follow at residues 2281–2359 and 2359–2408; these read STQY…PVEI and IKLI…RKMR. The segment at 2281–2408 is sufficient to block nuclear pore assembly; that stretch reads STQYVFSPPS…AKPVTRRKMR (128 aa). A DNA-binding region (a.T hook) is located at residues 2329–2341; that stretch reads SKPRGRPPKHKAK. Residues 2331–2348 show a composition bias toward basic residues; it reads PRGRPPKHKAKAVTRVLK. Residues 2378–2389 are compositionally biased toward basic and acidic residues; sequence DSTEAKGAEKIS.

It belongs to the ELYS family. As to quaternary structure, interacts with the Nup107-160 subcomplex of the NPC.

The protein resides in the nucleus. It localises to the nuclear pore complex. It is found in the cytoplasm. Its subcellular location is the nucleoplasm. Its function is as follows. Required for the assembly of a functional nuclear pore complex (NPC) on the surface of chromosomes as nuclei form at the end of mitosis. May initiate NPC assembly by binding to chromatin and recruiting the Nup107-160 subcomplex, which may in turn recruit membrane vesicles containing pom121 and tmem48/ndc1. Association with chromatin may require the presence of the mcm2-mcm7 complex, suggesting a mechanism for coordination of nuclear assembly and the inactivation of replication licensing. The sequence is that of Protein ELYS (ahctf1) from Xenopus laevis (African clawed frog).